A 738-amino-acid polypeptide reads, in one-letter code: Exocyst complex component 3 (738 aa).

Residues 28–91 (LEKVEQYRHR…DEVERLLRGV (64 aa)) are a coiled coil.

Belongs to the SEC6 family. The exocyst complex is composed of Sec3/Exoc1, Sec5/Exoc2, Sec6/Exoc3, Sec8/Exoc4, Sec10/Exoc5, Sec15/Exoc6, Exo70/Exoc7 and Exo84/Exoc8.

In terms of biological role, component of the exocyst complex involved in the docking of exocytic vesicles with fusion sites on the plasma membrane. This is Exocyst complex component 3 from Drosophila melanogaster (Fruit fly).